Consider the following 373-residue polypeptide: Alpha-N-acetylgalactosaminide alpha-2,6-sialyltransferase 2 (373 aa).

Topologically, residues 1-6 (MDLPRR) are cytoplasmic. A helical; Signal-anchor for type II membrane protein membrane pass occupies residues 7–27 (WLFRMLLLVATSSGILLMLYS). At 28–373 (SAGQQSPETQ…NAGILWLYQR (346 aa)) the chain is on the lumenal side. Disulfide bonds link Cys-65–Cys-147 and Cys-150–Cys-316. Asn-103 is a glycosylation site (N-linked (GlcNAc...) asparagine). Residue Asn-155 participates in CMP-N-acetyl-beta-neuraminate binding. A glycan (N-linked (GlcNAc...) asparagine) is linked at Asn-160. Asn-178, Ser-303, and His-335 together coordinate CMP-N-acetyl-beta-neuraminate.

The protein belongs to the glycosyltransferase 29 family. Highly expressed in lactating mammary gland and adult testis. Lower levels in kidney.

The protein localises to the golgi apparatus membrane. The catalysed reaction is a beta-D-galactosyl-(1-&gt;3)-N-acetyl-alpha-D-galactosaminyl derivative + CMP-N-acetyl-beta-neuraminate = a beta-D-galactosyl-(1-&gt;3)-[N-acetyl-alpha-neuraminyl-(2-&gt;6)]-N-acetyl-alpha-D-galactosaminyl derivative + CMP + H(+). It carries out the reaction a 3-O-[N-acetyl-alpha-D-galactosaminyl]-L-threonyl-[protein] + CMP-N-acetyl-beta-neuraminate = a 3-O-[N-acetyl-alpha-neuraminosyl-(2-&gt;6)-N-acetyl-alpha-D-galactosaminyl]-L-threonyl-[protein] + CMP + H(+). The enzyme catalyses a 3-O-[N-acetyl-alpha-neuraminyl-(2-&gt;3)-beta-D-galactosyl-(1-&gt;3)-N-acetyl-alpha-D-galactosaminyl]-L-threonyl-[protein] + CMP-N-acetyl-beta-neuraminate = a 3-O-{alpha-Neu5Ac-(2-&gt;3)-beta-D-Gal-(1-&gt;3)-[alpha-Neu5Ac-(2-&gt;6)]-alpha-D-GalNAc}-L-threonyl-[protein] + CMP + H(+). It participates in protein modification; protein glycosylation. In terms of biological role, catalyzes the transfer of N-acetylneuraminyl groups onto glycan chains in glycoproteins. Conjugates sialic acid with an alpha-2-6 linkage to N-acetylgalactosamine (GalNAc) glycan chains linked to serine or threonine in glycoproteins. Sialylates alphaGalNAc- and Galbeta1-&gt;3GalNAc-O-Ser/Thr epitopes also known as Tn and T antigens. This is Alpha-N-acetylgalactosaminide alpha-2,6-sialyltransferase 2 (St6galnac2) from Mus musculus (Mouse).